The chain runs to 389 residues: Chaperone protein DnaJ (389 aa).

The 65-residue stretch at 6–70 (DYYEILGLSK…EKRAQYDRFG (65 aa)) folds into the J domain. Residues 131 to 213 (GVRKDIDIPR…CSGAGRVRSR (83 aa)) form a CR-type zinc finger. Zn(2+) is bound by residues Cys-144, Cys-147, Cys-161, Cys-164, Cys-187, Cys-190, Cys-201, and Cys-204. CXXCXGXG motif repeat units follow at residues 144 to 151 (CSTCSGTG), 161 to 168 (CPNCGGTG), 187 to 194 (CSACHGRG), and 201 to 208 (CPTCSGAG). The tract at residues 145–167 (STCSGTGAKPGTSPKRCPNCGGT) is disordered. The disordered stretch occupies residues 351–389 (LSNGKKPEAEERSRSDKQKSEKPRKSKGLFEKVKDAFES). Residues 355–389 (KKPEAEERSRSDKQKSEKPRKSKGLFEKVKDAFES) are compositionally biased toward basic and acidic residues.

The protein belongs to the DnaJ family. Homodimer. Zn(2+) is required as a cofactor.

Its subcellular location is the cytoplasm. In terms of biological role, participates actively in the response to hyperosmotic and heat shock by preventing the aggregation of stress-denatured proteins and by disaggregating proteins, also in an autonomous, DnaK-independent fashion. Unfolded proteins bind initially to DnaJ; upon interaction with the DnaJ-bound protein, DnaK hydrolyzes its bound ATP, resulting in the formation of a stable complex. GrpE releases ADP from DnaK; ATP binding to DnaK triggers the release of the substrate protein, thus completing the reaction cycle. Several rounds of ATP-dependent interactions between DnaJ, DnaK and GrpE are required for fully efficient folding. Also involved, together with DnaK and GrpE, in the DNA replication of plasmids through activation of initiation proteins. This chain is Chaperone protein DnaJ, found in Methanosarcina mazei (strain ATCC BAA-159 / DSM 3647 / Goe1 / Go1 / JCM 11833 / OCM 88) (Methanosarcina frisia).